A 226-amino-acid chain; its full sequence is Membrane protein (226 aa).

At 1-11 (MSNGSIPVDEV) the chain is on the virion surface side. The chain crosses the membrane as a helical span at residues 12 to 32 (IEHLRNWNFTWNIILTILLVV). Topologically, residues 33-41 (LQYGHYKYS) are intravirion. Residues 42–62 (VFLYGVKMAILWILWPLVLAL) form a helical membrane-spanning segment. The Virion surface segment spans residues 63–75 (SLFDAWASFQVNW). Residues 76–96 (VFFAFSILMACITLMLWIMYF) traverse the membrane as a helical segment. Over 97-226 (VNSIRLWRRT…TDSEKVLHLV (130 aa)) the chain is Intravirion. The tract at residues 200 to 216 (RSKHGDYSAVSNPSAVL) is interaction with N protein.

Belongs to the alphacoronaviruses M protein family. In terms of assembly, homomultimer. Interacts with envelope E protein in the budding compartment of the host cell, which is located between endoplasmic reticulum and the Golgi complex. Forms a complex with HE and S proteins. Interacts with nucleocapsid N protein. This interaction probably participates in RNA packaging into the virus.

It localises to the virion membrane. The protein resides in the host Golgi apparatus membrane. Its function is as follows. Component of the viral envelope that plays a central role in virus morphogenesis and assembly via its interactions with other viral proteins. The sequence is that of Membrane protein from Sus scrofa (Pig).